The chain runs to 303 residues: Methionyl-tRNA formyltransferase (303 aa).

108-111 (SDLP) lines the (6S)-5,6,7,8-tetrahydrofolate pocket.

This sequence belongs to the Fmt family.

It catalyses the reaction L-methionyl-tRNA(fMet) + (6R)-10-formyltetrahydrofolate = N-formyl-L-methionyl-tRNA(fMet) + (6S)-5,6,7,8-tetrahydrofolate + H(+). Its function is as follows. Attaches a formyl group to the free amino group of methionyl-tRNA(fMet). The formyl group appears to play a dual role in the initiator identity of N-formylmethionyl-tRNA by promoting its recognition by IF2 and preventing the misappropriation of this tRNA by the elongation apparatus. This Rickettsia typhi (strain ATCC VR-144 / Wilmington) protein is Methionyl-tRNA formyltransferase.